A 531-amino-acid polypeptide reads, in one-letter code: Protein tweety homolog 2-like (531 aa).

Residues 1–44 (MASSRQDYIAPWWTYWLHNFPHLNFNFQTVDNTFKPEDASYQQS) lie on the Extracellular side of the membrane. A helical membrane pass occupies residues 45 to 65 (LVFLACVSAVALGLCLLLLSV). Over 66 to 87 (YLTCLCCCRREEDEEVKRPDTC) the chain is Cytoplasmic. The chain crosses the membrane as a helical span at residues 88–108 (CVTWAAVITGLVICSAVGVGF). The Extracellular portion of the chain corresponds to 109-213 (YGNSETNDGV…RTAFIEYYRW (105 aa)). Asparagine 129 is a glycosylation site (N-linked (GlcNAc...) asparagine). A helical transmembrane segment spans residues 214 to 234 (LTYLLLLILDLVICLLACLAL). Topologically, residues 235–239 (AKQSR) are cytoplasmic. A helical membrane pass occupies residues 240 to 260 (WLLTVIMVCGMLTLIMSWASL). Topologically, residues 261 to 389 (GAGTATAVGT…GVCYDGVEGL (129 aa)) are extracellular. 2 N-linked (GlcNAc...) asparagine glycosylation sites follow: asparagine 283 and asparagine 352. Residues 390 to 410 (LYLCLFSLLAACAFCALLCAV) form a helical membrane-spanning segment. Topologically, residues 411–531 (PRAWMLIAIR…IRHFGTDFQV (121 aa)) are cytoplasmic.

Belongs to the tweety family.

It is found in the cell membrane. In terms of biological role, probable large-conductance Ca(2+)-activated chloride channel. The protein is Protein tweety homolog 2-like (ttyh2l) of Danio rerio (Zebrafish).